The sequence spans 182 residues: Large ribosomal subunit protein uL5 (182 aa).

This sequence belongs to the universal ribosomal protein uL5 family. In terms of assembly, part of the 50S ribosomal subunit; part of the 5S rRNA/L5/L18/L25 subcomplex. Contacts the 5S rRNA and the P site tRNA. Forms a bridge to the 30S subunit in the 70S ribosome.

Functionally, this is one of the proteins that bind and probably mediate the attachment of the 5S RNA into the large ribosomal subunit, where it forms part of the central protuberance. In the 70S ribosome it contacts protein S13 of the 30S subunit (bridge B1b), connecting the 2 subunits; this bridge is implicated in subunit movement. Contacts the P site tRNA; the 5S rRNA and some of its associated proteins might help stabilize positioning of ribosome-bound tRNAs. In Borreliella afzelii (strain PKo) (Borrelia afzelii), this protein is Large ribosomal subunit protein uL5.